A 186-amino-acid polypeptide reads, in one-letter code: Adenine phosphoribosyltransferase (186 aa).

It belongs to the purine/pyrimidine phosphoribosyltransferase family. In terms of assembly, homodimer.

The protein localises to the cytoplasm. It carries out the reaction AMP + diphosphate = 5-phospho-alpha-D-ribose 1-diphosphate + adenine. It participates in purine metabolism; AMP biosynthesis via salvage pathway; AMP from adenine: step 1/1. Catalyzes a salvage reaction resulting in the formation of AMP, that is energically less costly than de novo synthesis. The polypeptide is Adenine phosphoribosyltransferase (Xanthomonas campestris pv. campestris (strain B100)).